Reading from the N-terminus, the 318-residue chain is Homoserine kinase (318 aa).

An ATP-binding site is contributed by 97-107 (PIGSGLGSSAC).

This sequence belongs to the GHMP kinase family. Homoserine kinase subfamily.

The protein localises to the cytoplasm. The enzyme catalyses L-homoserine + ATP = O-phospho-L-homoserine + ADP + H(+). It functions in the pathway amino-acid biosynthesis; L-threonine biosynthesis; L-threonine from L-aspartate: step 4/5. Catalyzes the ATP-dependent phosphorylation of L-homoserine to L-homoserine phosphate. This Aliivibrio salmonicida (strain LFI1238) (Vibrio salmonicida (strain LFI1238)) protein is Homoserine kinase.